Consider the following 177-residue polypeptide: Large ribosomal subunit protein uL6 (177 aa).

It belongs to the universal ribosomal protein uL6 family. Part of the 50S ribosomal subunit.

In terms of biological role, this protein binds to the 23S rRNA, and is important in its secondary structure. It is located near the subunit interface in the base of the L7/L12 stalk, and near the tRNA binding site of the peptidyltransferase center. The polypeptide is Large ribosomal subunit protein uL6 (Vibrio campbellii (strain ATCC BAA-1116)).